Reading from the N-terminus, the 302-residue chain is Putative S-adenosyl-L-methionine-dependent methyltransferase MAP_1622c (302 aa).

S-adenosyl-L-methionine contacts are provided by residues aspartate 129 and 158–159; that span reads DL.

This sequence belongs to the UPF0677 family.

In terms of biological role, exhibits S-adenosyl-L-methionine-dependent methyltransferase activity. This Mycolicibacterium paratuberculosis (strain ATCC BAA-968 / K-10) (Mycobacterium paratuberculosis) protein is Putative S-adenosyl-L-methionine-dependent methyltransferase MAP_1622c.